The chain runs to 457 residues: UDP-N-acetylmuramoylalanine--D-glutamate ligase (457 aa).

Position 116-122 (glycine 116–threonine 122) interacts with ATP.

Belongs to the MurCDEF family.

It is found in the cytoplasm. The enzyme catalyses UDP-N-acetyl-alpha-D-muramoyl-L-alanine + D-glutamate + ATP = UDP-N-acetyl-alpha-D-muramoyl-L-alanyl-D-glutamate + ADP + phosphate + H(+). The protein operates within cell wall biogenesis; peptidoglycan biosynthesis. Functionally, cell wall formation. Catalyzes the addition of glutamate to the nucleotide precursor UDP-N-acetylmuramoyl-L-alanine (UMA). This chain is UDP-N-acetylmuramoylalanine--D-glutamate ligase, found in Caldicellulosiruptor bescii (strain ATCC BAA-1888 / DSM 6725 / KCTC 15123 / Z-1320) (Anaerocellum thermophilum).